Consider the following 368-residue polypeptide: Nicotinamide/nicotinic acid mononucleotide adenylyltransferase (368 aa).

The span at 1-14 (MHTMNGDNFANSFP) shows a compositional bias: polar residues. A disordered region spans residues 1-25 (MHTMNGDNFANSFPKNPLLSRNSSS). S36 carries the post-translational modification Phosphoserine. The disordered stretch occupies residues 47–78 (AKEHEERIRRPSVNRAWQKNSTSGGPSVSLEK). The span at 61 to 72 (RAWQKNSTSGGP) shows a compositional bias: polar residues. Phosphoserine is present on residues S75 and S85. NAD(+) contacts are provided by S135 and F136. H143 provides a ligand contact to ATP. Residues T215, G250, D252, W263, R282, and N313 each contribute to the NAD(+) site. 318 to 321 (TKVR) provides a ligand contact to ATP.

The protein belongs to the eukaryotic NMN adenylyltransferase family. A divalent metal cation is required as a cofactor.

Its subcellular location is the cytoplasm. The protein resides in the nucleus. The enzyme catalyses beta-nicotinamide D-ribonucleotide + ATP + H(+) = diphosphate + NAD(+). It catalyses the reaction nicotinate beta-D-ribonucleotide + ATP + H(+) = deamido-NAD(+) + diphosphate. It functions in the pathway cofactor biosynthesis; NAD(+) biosynthesis; deamido-NAD(+) from nicotinate D-ribonucleotide: step 1/1. It participates in cofactor biosynthesis; NAD(+) biosynthesis; NAD(+) from nicotinamide D-ribonucleotide: step 1/1. Catalyzes the formation of NAD(+) from nicotinamide mononucleotide (NMN) and ATP. Can also use the deamidated form; nicotinic acid mononucleotide (NaMN) as substrate to form deamido-NAD(+) (NaAD). Key enzyme in both de novo and salvage pathways for NAD(+) biosynthesis. This chain is Nicotinamide/nicotinic acid mononucleotide adenylyltransferase, found in Schizosaccharomyces pombe (strain 972 / ATCC 24843) (Fission yeast).